The chain runs to 355 residues: Aromatic amino acid aminotransferase (355 aa).

K217 carries the post-translational modification N6-(pyridoxal phosphate)lysine.

The protein belongs to the class-II pyridoxal-phosphate-dependent aminotransferase family. As to quaternary structure, homodimer. Pyridoxal 5'-phosphate serves as cofactor.

The enzyme catalyses an aromatic L-alpha-amino acid + 2-oxoglutarate = an aromatic oxo-acid + L-glutamate. Its function is as follows. Aminotransferase that catalyzes the conversion of aromatic amino acids and 2-oxoglutarate into corresponding aromatic oxo acids and L-glutamate. The polypeptide is Aromatic amino acid aminotransferase (Mycobacterium avium (strain 104)).